A 79-amino-acid chain; its full sequence is Sec-independent protein translocase protein TatA (79 aa).

The helical transmembrane segment at 1–21 (MGGFTSIWHWVIVLLVIVLLF) threads the bilayer. The disordered stretch occupies residues 54–79 (ELKTLDAQATQTKVHETSEIKSKQES). A compositionally biased stretch (basic and acidic residues) spans 66-79 (KVHETSEIKSKQES).

Belongs to the TatA/E family. As to quaternary structure, the Tat system comprises two distinct complexes: a TatABC complex, containing multiple copies of TatA, TatB and TatC subunits, and a separate TatA complex, containing only TatA subunits. Substrates initially bind to the TatABC complex, which probably triggers association of the separate TatA complex to form the active translocon.

It is found in the cell inner membrane. Part of the twin-arginine translocation (Tat) system that transports large folded proteins containing a characteristic twin-arginine motif in their signal peptide across membranes. TatA could form the protein-conducting channel of the Tat system. In Helicobacter pylori (strain J99 / ATCC 700824) (Campylobacter pylori J99), this protein is Sec-independent protein translocase protein TatA.